A 311-amino-acid polypeptide reads, in one-letter code: ATP synthase gamma chain (311 aa).

A disulfide bond links Cys67 and Cys138.

Belongs to the ATPase gamma chain family. In terms of assembly, F-type ATPases have 2 components, CF(1) - the catalytic core - and CF(0) - the membrane proton channel. CF(1) has five subunits: alpha(3), beta(3), gamma(1), delta(1), epsilon(1). CF(0) has three main subunits: a, b and c.

It localises to the cellular thylakoid membrane. With respect to regulation, thiol-modulation by raising the activation threshold of the enzyme upon oxidation of the cysteines, thereby preventing wasteful ATP-hydrolysis. Its function is as follows. Produces ATP from ADP in the presence of a proton gradient across the membrane. The gamma chain is believed to be important in regulating ATPase activity and the flow of protons through the CF(0) complex. The polypeptide is ATP synthase gamma chain (atpG) (Arthrospira platensis (Spirulina platensis)).